A 195-amino-acid polypeptide reads, in one-letter code: Flavin prenyltransferase UbiX (195 aa).

Residues 17 to 19 (GGS), Ser43, 94 to 97 (SAGT), and Arg129 contribute to the FMN site. Residues Tyr159 and Arg175 each contribute to the dimethylallyl phosphate site.

Belongs to the UbiX/PAD1 family.

The enzyme catalyses dimethylallyl phosphate + FMNH2 = prenylated FMNH2 + phosphate. Flavin prenyltransferase that catalyzes the synthesis of the prenylated FMN cofactor (prenyl-FMN) for 4-hydroxy-3-polyprenylbenzoic acid decarboxylase UbiD. The prenyltransferase is metal-independent and links a dimethylallyl moiety from dimethylallyl monophosphate (DMAP) to the flavin N5 and C6 atoms of FMN. This is Flavin prenyltransferase UbiX from Deinococcus radiodurans (strain ATCC 13939 / DSM 20539 / JCM 16871 / CCUG 27074 / LMG 4051 / NBRC 15346 / NCIMB 9279 / VKM B-1422 / R1).